Reading from the N-terminus, the 319-residue chain is MRERTVTYSPAFTLVPTRECFNRCGYCNFRADRGAAWLQPAEVRALLLPLVGSGVVEILVLSGEVHPHDPRRGEWFAMIEDICAVALELGFLPHTNCGVLSFEEMRALQQLNVSLGLMLEIDSNRLLGGVHRHAPSKIPALRTAQLEWAGALGIPFTTGLLLGIGETPAEREDTLRTIARLQDRHGHIQEVILQPHSPGGSQSWAGEPLGDAQLLGVVRLARQILPAEITIQIPPNLVGDPVPLLEAGARDLGGIGPVDVVNPDYAHPVVERLGERLAAAGWRLEPRLPVYPHLDKRVATALQPLLGEHRARLCQAAVT.

A Radical SAM core domain is found at 6 to 236 (VTYSPAFTLV…AEITIQIPPN (231 aa)). [4Fe-4S] cluster contacts are provided by C20, C24, and C27.

Belongs to the radical SAM superfamily. CofG family. As to quaternary structure, consists of two subunits, CofG and CofH. Requires [4Fe-4S] cluster as cofactor.

It carries out the reaction 5-amino-5-(4-hydroxybenzyl)-6-(D-ribitylimino)-5,6-dihydrouracil + S-adenosyl-L-methionine = 7,8-didemethyl-8-hydroxy-5-deazariboflavin + 5'-deoxyadenosine + L-methionine + NH4(+) + H(+). The protein operates within cofactor biosynthesis; coenzyme F0 biosynthesis. Catalyzes the radical-mediated synthesis of 7,8-didemethyl-8-hydroxy-5-deazariboflavin from 5-amino-5-(4-hydroxybenzyl)-6-(D-ribitylimino)-5,6-dihydrouracil. This chain is 7,8-didemethyl-8-hydroxy-5-deazariboflavin synthase, found in Gloeobacter violaceus (strain ATCC 29082 / PCC 7421).